Reading from the N-terminus, the 83-residue chain is Kappa-theraphotoxin-Cg2b (83 aa).

The N-terminal stretch at 1-21 (MKGSAFAIILGLVVLCACSFA) is a signal peptide. Residues 22–53 (EDEQDQFASPNELLRSMFLESRHELIPEVEGR) constitute a propeptide that is removed on maturation. Intrachain disulfides connect Cys-55–Cys-69, Cys-62–Cys-74, and Cys-68–Cys-78.

The protein belongs to the neurotoxin 30 (phrixotoxin) family. As to expression, expressed by the venom gland.

It localises to the secreted. Functionally, probable ion channel inhibitor. The chain is Kappa-theraphotoxin-Cg2b from Chilobrachys guangxiensis (Chinese earth tiger tarantula).